We begin with the raw amino-acid sequence, 191 residues long: Nascent polypeptide-associated complex subunit alpha (191 aa).

Residues 24 to 89 form the NAC-A/B domain; it reads SRPERKARKA…AKVEDPNSAA (66 aa). A disordered region spans residues 126–149; sequence QDAPSADSSAPAPSGEATDASASG. Positions 127–139 are enriched in low complexity; the sequence is DAPSADSSAPAPS. Residues 153-191 form the UBA domain; it reads VSDEEIQLIVAQTGVDEAKAREAYISEKGDLINAIMKLQ.

The protein belongs to the NAC-alpha family. Part of the nascent polypeptide-associated complex (NAC), consisting of EGD2 and EGD1. NAC associates with ribosomes via EGD1.

The protein localises to the cytoplasm. Its subcellular location is the nucleus. Component of the nascent polypeptide-associated complex (NAC), a dynamic component of the ribosomal exit tunnel, protecting the emerging polypeptides from interaction with other cytoplasmic proteins to ensure appropriate nascent protein targeting. The NAC complex also promotes mitochondrial protein import by enhancing productive ribosome interactions with the outer mitochondrial membrane and blocks the inappropriate interaction of ribosomes translating non-secretory nascent polypeptides with translocation sites in the membrane of the endoplasmic reticulum. EGD2 may also be involved in transcription regulation. This Cryptococcus neoformans var. neoformans serotype D (strain B-3501A) (Filobasidiella neoformans) protein is Nascent polypeptide-associated complex subunit alpha (EGD2).